The following is a 309-amino-acid chain: Homoserine O-succinyltransferase (309 aa).

Cys142 (acyl-thioester intermediate) is an active-site residue. Substrate-binding residues include Lys163 and Ser192. Catalysis depends on His235, which acts as the Proton acceptor. The active site involves Glu237. Arg249 is a binding site for substrate.

The protein belongs to the MetA family. As to quaternary structure, homodimer.

The protein localises to the cytoplasm. The catalysed reaction is L-homoserine + succinyl-CoA = O-succinyl-L-homoserine + CoA. It participates in amino-acid biosynthesis; L-methionine biosynthesis via de novo pathway; O-succinyl-L-homoserine from L-homoserine: step 1/1. In terms of biological role, transfers a succinyl group from succinyl-CoA to L-homoserine, forming succinyl-L-homoserine. The sequence is that of Homoserine O-succinyltransferase from Escherichia coli (strain ATCC 8739 / DSM 1576 / NBRC 3972 / NCIMB 8545 / WDCM 00012 / Crooks).